A 350-amino-acid chain; its full sequence is tRNA uridine(34) hydroxylase (350 aa).

The 95-residue stretch at 146-240 folds into the Rhodanese domain; the sequence is DDPDALFIDM…YARKARDQGL (95 aa). C200 acts as the Cysteine persulfide intermediate in catalysis.

Belongs to the TrhO family.

The catalysed reaction is uridine(34) in tRNA + AH2 + O2 = 5-hydroxyuridine(34) in tRNA + A + H2O. In terms of biological role, catalyzes oxygen-dependent 5-hydroxyuridine (ho5U) modification at position 34 in tRNAs, the first step in 5-carboxymethoxyuridine (cmo5U) biosynthesis. May be part of an alternate pathway, which is able to bypass cmo5U biogenesis in a subset of tRNAs under aerobic conditions. The polypeptide is tRNA uridine(34) hydroxylase (Escherichia coli O6:K15:H31 (strain 536 / UPEC)).